The following is a 726-amino-acid chain: PWWP domain-containing protein 2 (726 aa).

The span at 1 to 10 (MSTESERIES) shows a compositional bias: basic and acidic residues. A disordered region spans residues 1–26 (MSTESERIESVSEANASSLEVGNDQM). Over residues 12–26 (SEANASSLEVGNDQM) the composition is skewed to polar residues. Residues 199–260 (DSDLVWAKVR…ASRIKPFRQH (62 aa)) enclose the PWWP domain. The tract at residues 392–441 (APKISPAEEQSSLVEVSDPEPTKSKQVYTKRRKTNLQTEQSSLVEVSDPD) is disordered. Residues 426-435 (NLQTEQSSLV) are compositionally biased toward polar residues. 2 consecutive short sequence motifs (nuclear localization signal) follow at residues 460–467 (KKKEKTLA) and 495–502 (KKRKVVQS). 2 disordered regions span residues 472–545 (EKRV…PQKA) and 568–726 (TRLL…VSAE). The span at 494–512 (EKKRKVVQSKVPKSTKKIK) shows a compositional bias: basic residues. A compositionally biased stretch (polar residues) spans 606–634 (SPSTTLSSPHAASVTKTTSGKSNSVSLDH). Positions 658 to 688 (LESRDLKDSSKEQVVHEDKKEAANVADEKSI) are enriched in basic and acidic residues.

Belongs to the PDP family. As to quaternary structure, interacts with DEK3. Binds to MSI4/FVE and MSI5. Component of the PRC2 (polycomb repressive complex 2) complex which regulates histone methylation on histone H3K27.

The protein resides in the nucleus. Together with PDP1, PDP3 and PDP6, interacts with MSI4/FVE and MSI5 to suppress FLC, MAF4 and MAF5 expression by regulating the function of the PRC2 complex and modulating H3K27me3 level, thereby promoting flowering. This is PWWP domain-containing protein 2 from Arabidopsis thaliana (Mouse-ear cress).